A 107-amino-acid polypeptide reads, in one-letter code: Probable monothiol glutaredoxin 2 (107 aa).

The region spanning 7 to 107 is the Glutaredoxin domain; sequence LEFIQNAIKK…LEKMLKDVVV (101 aa). Position 24 (lysine 24) interacts with glutathione. Cysteine 32 provides a ligand contact to [2Fe-2S] cluster. Glutathione is bound by residues arginine 61, phenylalanine 73, and 86 to 87; that span reads CD.

It belongs to the glutaredoxin family. Monothiol subfamily.

The polypeptide is Probable monothiol glutaredoxin 2 (grxC2) (Rickettsia prowazekii (strain Madrid E)).